A 254-amino-acid polypeptide reads, in one-letter code: Major prion protein (254 aa).

The first 22 residues, 1-22 (MANLSYWLLALFVATWTDVGLC), serve as a signal peptide directing secretion. Residues 23-231 (KKRPKPGGWN…SQAYYDGRRS (209 aa)) form an interaction with GRB2, ERI3 and SYN1 region. The segment at 25–108 (RPKPGGWNTG…WNKPNKPKTS (84 aa)) is disordered. Tandem repeats lie at residues 51-59 (PQGGGTWGQ), 60-67 (PHGGGWGQ), 68-75 (PHGGGWGQ), 76-83 (PHGGGWGQ), and 84-91 (PHGGGWGQ). The 5 X 8 AA tandem repeats of P-H-G-G-G-W-G-Q stretch occupies residues 51 to 91 (PQGGGTWGQPHGGGWGQPHGGGWGQPHGGGWGQPHGGGWGQ). Gly residues predominate over residues 52-95 (QGGGTWGQPHGGGWGQPHGGGWGQPHGGGWGQPHGGGWGQGGGT). 12 residues coordinate Cu(2+): H61, G62, G63, H69, G70, G71, H77, G78, G79, H85, G86, and G87. The segment at 90–231 (GQGGGTHNQW…SQAYYDGRRS (142 aa)) is prP27-30 (protease resistant core). C179 and C214 are oxidised to a cystine. 2 N-linked (GlcNAc...) asparagine glycosylation sites follow: N181 and N197. Residue S231 is the site of GPI-anchor amidated serine attachment. A propeptide spans 232 to 254 (SAVLFSSPPVILLISFLIFLIVG) (removed in mature form).

It belongs to the prion family. Monomer and homodimer. Has a tendency to aggregate into amyloid fibrils containing a cross-beta spine, formed by a steric zipper of superposed beta-strands. Soluble oligomers may represent an intermediate stage on the path to fibril formation. Copper binding may promote oligomerization. Interacts with GRB2, APP, ERI3/PRNPIP and SYN1. Mislocalized cytosolically exposed PrP interacts with MGRN1; this interaction alters MGRN1 subcellular location and causes lysosomal enlargement. Interacts with KIAA1191.

It localises to the cell membrane. The protein localises to the golgi apparatus. Its primary physiological function is unclear. Has cytoprotective activity against internal or environmental stresses. May play a role in neuronal development and synaptic plasticity. May be required for neuronal myelin sheath maintenance. May play a role in iron uptake and iron homeostasis. Soluble oligomers are toxic to cultured neuroblastoma cells and induce apoptosis (in vitro). Association with GPC1 (via its heparan sulfate chains) targets PRNP to lipid rafts. Also provides Cu(2+) or Zn(2+) for the ascorbate-mediated GPC1 deaminase degradation of its heparan sulfate side chains. The protein is Major prion protein (PRNP) of Nothocricetulus migratorius (Gray dwarf hamster).